Reading from the N-terminus, the 129-residue chain is Prefoldin subunit 6 (129 aa).

Coiled-coil stretches lie at residues 6–26 (VRDLQRDLENKANDLGKIQKD) and 84–118 (IEYISAELKRLDAILQDMEEKQNNKRETIMKLQQR).

It belongs to the prefoldin subunit beta family. Heterohexamer of two PFD-alpha type and four PFD-beta type subunits forming prefoldin co-chaperone complex. Interacts with PFD2, PFD3, PFD4 and PFD5. Interacts with LSM8, a specific subunit of the LSM2-8 complex, which is a core component of the spliceosome. Binds to HSP90 to facilitate the formation of a larger complex made at least of HSP90, PFD6 and LSM8.

It is found in the cytoplasm. Its subcellular location is the nucleus. Binds specifically to cytosolic chaperonin (c-CPN) and transfers target proteins to it. Binds to nascent polypeptide chain and promotes folding in an environment in which there are many competing pathways for nonnative proteins. Together with other chaperonins, contribute to the regulation of gene expression by modulating the spliceosome function on pre-mRNA splicing post-transcriptionally by acting as a co-chaperone of Hsp90 to control levels of LSM8. Required for the biogenesis of tubulins and for subsequent microtubules (MTs) organization and dynamicity, but unable to associate with microtubules. Involved in the process leading to microtubules dissociation in response to gibberellic acid (GA) probably due to the DELLA proteins-mediated translocation of the prefoldin co-chaperone complex from the cytoplasm to the nucleus. Contributes to the GA-dependent regulation of PIN2 trafficking at the plasma membrane, thus influencing auxin flux. This is Prefoldin subunit 6 from Arabidopsis thaliana (Mouse-ear cress).